A 246-amino-acid chain; its full sequence is Small ribosomal subunit protein uS2 (246 aa).

Belongs to the universal ribosomal protein uS2 family.

The polypeptide is Small ribosomal subunit protein uS2 (Helicobacter acinonychis (strain Sheeba)).